Reading from the N-terminus, the 460-residue chain is ATP synthase subunit beta (460 aa).

150–157 (GGAGVGKT) serves as a coordination point for ATP.

It belongs to the ATPase alpha/beta chains family. F-type ATPases have 2 components, CF(1) - the catalytic core - and CF(0) - the membrane proton channel. CF(1) has five subunits: alpha(3), beta(3), gamma(1), delta(1), epsilon(1). CF(0) has three main subunits: a(1), b(2) and c(9-12). The alpha and beta chains form an alternating ring which encloses part of the gamma chain. CF(1) is attached to CF(0) by a central stalk formed by the gamma and epsilon chains, while a peripheral stalk is formed by the delta and b chains.

It localises to the cell inner membrane. The enzyme catalyses ATP + H2O + 4 H(+)(in) = ADP + phosphate + 5 H(+)(out). Produces ATP from ADP in the presence of a proton gradient across the membrane. The catalytic sites are hosted primarily by the beta subunits. The sequence is that of ATP synthase subunit beta from Shigella dysenteriae serotype 1 (strain Sd197).